Consider the following 234-residue polypeptide: Large ribosomal subunit protein uL1 (234 aa).

Belongs to the universal ribosomal protein uL1 family. As to quaternary structure, part of the 50S ribosomal subunit.

Its function is as follows. Binds directly to 23S rRNA. The L1 stalk is quite mobile in the ribosome, and is involved in E site tRNA release. In terms of biological role, protein L1 is also a translational repressor protein, it controls the translation of the L11 operon by binding to its mRNA. In Serratia proteamaculans (strain 568), this protein is Large ribosomal subunit protein uL1.